The following is a 163-amino-acid chain: Crossover junction endodeoxyribonuclease RuvC (163 aa).

Residues aspartate 7, glutamate 68, and histidine 142 contribute to the active site. Residues aspartate 7, glutamate 68, and histidine 142 each coordinate Mg(2+).

Belongs to the RuvC family. In terms of assembly, homodimer which binds Holliday junction (HJ) DNA. The HJ becomes 2-fold symmetrical on binding to RuvC with unstacked arms; it has a different conformation from HJ DNA in complex with RuvA. In the full resolvosome a probable DNA-RuvA(4)-RuvB(12)-RuvC(2) complex forms which resolves the HJ. It depends on Mg(2+) as a cofactor.

It localises to the cytoplasm. It carries out the reaction Endonucleolytic cleavage at a junction such as a reciprocal single-stranded crossover between two homologous DNA duplexes (Holliday junction).. Functionally, the RuvA-RuvB-RuvC complex processes Holliday junction (HJ) DNA during genetic recombination and DNA repair. Endonuclease that resolves HJ intermediates. Cleaves cruciform DNA by making single-stranded nicks across the HJ at symmetrical positions within the homologous arms, yielding a 5'-phosphate and a 3'-hydroxyl group; requires a central core of homology in the junction. The consensus cleavage sequence is 5'-(A/T)TT(C/G)-3'. Cleavage occurs on the 3'-side of the TT dinucleotide at the point of strand exchange. HJ branch migration catalyzed by RuvA-RuvB allows RuvC to scan DNA until it finds its consensus sequence, where it cleaves and resolves the cruciform DNA. This Anaplasma phagocytophilum (strain HZ) protein is Crossover junction endodeoxyribonuclease RuvC.